A 257-amino-acid chain; its full sequence is Thiazole synthase (257 aa).

The active-site Schiff-base intermediate with DXP is the Lys96. 1-deoxy-D-xylulose 5-phosphate-binding positions include Gly157, 184-185, and 206-207; these read AG and NT.

It belongs to the ThiG family. Homotetramer. Forms heterodimers with either ThiH or ThiS.

It is found in the cytoplasm. The enzyme catalyses [ThiS sulfur-carrier protein]-C-terminal-Gly-aminoethanethioate + 2-iminoacetate + 1-deoxy-D-xylulose 5-phosphate = [ThiS sulfur-carrier protein]-C-terminal Gly-Gly + 2-[(2R,5Z)-2-carboxy-4-methylthiazol-5(2H)-ylidene]ethyl phosphate + 2 H2O + H(+). It functions in the pathway cofactor biosynthesis; thiamine diphosphate biosynthesis. Catalyzes the rearrangement of 1-deoxy-D-xylulose 5-phosphate (DXP) to produce the thiazole phosphate moiety of thiamine. Sulfur is provided by the thiocarboxylate moiety of the carrier protein ThiS. In vitro, sulfur can be provided by H(2)S. This Rhizobium meliloti (strain 1021) (Ensifer meliloti) protein is Thiazole synthase.